Reading from the N-terminus, the 227-residue chain is MAYPLQLGFQDATSPIMEELLHFHDHTLMIVFLISSLVLYIISLMLTTKLTHTSTMDAQEVETIWTILPAIILILIALPSLRILYMMDEINNPSLTIKTMGHQWYWSYEYTDYEDLTFDSYMIPTSDLKPGELRLLEVDNRVVLPMEMTIRMLISSEDVLHSWAVPSLGLKTDAIPGRLNQTTLISTRPGLYYGQCSEICGSNHSFMPIVLELVPLKHFEKWSTSML.

Residues 1–14 (MAYPLQLGFQDATS) are Mitochondrial intermembrane-facing. A helical transmembrane segment spans residues 15 to 45 (PIMEELLHFHDHTLMIVFLISSLVLYIISLM). Topologically, residues 46–59 (LTTKLTHTSTMDAQ) are mitochondrial matrix. Residues 60 to 87 (EVETIWTILPAIILILIALPSLRILYMM) form a helical membrane-spanning segment. The Mitochondrial intermembrane portion of the chain corresponds to 88 to 227 (DEINNPSLTI…HFEKWSTSML (140 aa)). His161, Cys196, Glu198, Cys200, His204, and Met207 together coordinate Cu cation. Glu198 contacts Mg(2+).

This sequence belongs to the cytochrome c oxidase subunit 2 family. As to quaternary structure, component of the cytochrome c oxidase (complex IV, CIV), a multisubunit enzyme composed of 14 subunits. The complex is composed of a catalytic core of 3 subunits MT-CO1, MT-CO2 and MT-CO3, encoded in the mitochondrial DNA, and 11 supernumerary subunits COX4I, COX5A, COX5B, COX6A, COX6B, COX6C, COX7A, COX7B, COX7C, COX8 and NDUFA4, which are encoded in the nuclear genome. The complex exists as a monomer or a dimer and forms supercomplexes (SCs) in the inner mitochondrial membrane with NADH-ubiquinone oxidoreductase (complex I, CI) and ubiquinol-cytochrome c oxidoreductase (cytochrome b-c1 complex, complex III, CIII), resulting in different assemblies (supercomplex SCI(1)III(2)IV(1) and megacomplex MCI(2)III(2)IV(2)). Found in a complex with TMEM177, COA6, COX18, COX20, SCO1 and SCO2. Interacts with TMEM177 in a COX20-dependent manner. Interacts with COX20. Interacts with COX16. Cu cation is required as a cofactor.

It is found in the mitochondrion inner membrane. It carries out the reaction 4 Fe(II)-[cytochrome c] + O2 + 8 H(+)(in) = 4 Fe(III)-[cytochrome c] + 2 H2O + 4 H(+)(out). Component of the cytochrome c oxidase, the last enzyme in the mitochondrial electron transport chain which drives oxidative phosphorylation. The respiratory chain contains 3 multisubunit complexes succinate dehydrogenase (complex II, CII), ubiquinol-cytochrome c oxidoreductase (cytochrome b-c1 complex, complex III, CIII) and cytochrome c oxidase (complex IV, CIV), that cooperate to transfer electrons derived from NADH and succinate to molecular oxygen, creating an electrochemical gradient over the inner membrane that drives transmembrane transport and the ATP synthase. Cytochrome c oxidase is the component of the respiratory chain that catalyzes the reduction of oxygen to water. Electrons originating from reduced cytochrome c in the intermembrane space (IMS) are transferred via the dinuclear copper A center (CU(A)) of subunit 2 and heme A of subunit 1 to the active site in subunit 1, a binuclear center (BNC) formed by heme A3 and copper B (CU(B)). The BNC reduces molecular oxygen to 2 water molecules using 4 electrons from cytochrome c in the IMS and 4 protons from the mitochondrial matrix. The protein is Cytochrome c oxidase subunit 2 (MT-CO2) of Rhinoceros unicornis (Greater Indian rhinoceros).